A 450-amino-acid polypeptide reads, in one-letter code: F-box/FBD/LRR-repeat protein At5g22660 (450 aa).

The region spanning 12-58 (EDRISSLPDHLLSQILSNLPTENAVTTSILSTRWKDLWLSTPVLDID) is the F-box domain. LRR repeat units follow at residues 157-181 (LPNLKVMHLEENIYSYAETMEKFIS) and 294-317 (LSSLRDMTISGTTLKIICHYLKHE). The FBD domain occupies 364–416 (EEISLSSSVPKCLQSSLENVEIIRPNYGSGEEMKLSKYFLENSLVLKKFKLCR).

The protein is F-box/FBD/LRR-repeat protein At5g22660 of Arabidopsis thaliana (Mouse-ear cress).